The following is a 311-amino-acid chain: Apulose-4-phosphate transketolase subunit B (311 aa).

The protein belongs to the transketolase family. In terms of assembly, probable heterodimer composed of AptA and AptB. It depends on thiamine diphosphate as a cofactor.

The enzyme catalyses apulose 4-phosphate + D-glyceraldehyde 3-phosphate = D-xylulose 5-phosphate + dihydroxyacetone phosphate. It functions in the pathway carbohydrate metabolism. Involved in catabolism of D-apiose. Catalyzes the transfer of the glycolaldehyde group from apulose-4-phosphate to D-glyceraldehyde 3-phosphate, generating dihydroxyacetone phosphate and D-xylulose-5-phosphate. In Actinobacillus succinogenes (strain ATCC 55618 / DSM 22257 / CCUG 43843 / 130Z), this protein is Apulose-4-phosphate transketolase subunit B.